The chain runs to 373 residues: tRNA-specific 2-thiouridylase MnmA (373 aa).

ATP contacts are provided by residues 12–19 and Met38; that span reads GMSGGVDS. Residues 98–100 form an interaction with target base in tRNA region; it reads NPD. The active-site Nucleophile is Cys103. Cysteines 103 and 200 form a disulfide. Gly127 lines the ATP pocket. Residues 150 to 152 are interaction with tRNA; the sequence is KDQ. Residue Cys200 is the Cysteine persulfide intermediate of the active site. The interaction with tRNA stretch occupies residues 312–313; it reads RY.

Belongs to the MnmA/TRMU family.

It localises to the cytoplasm. It carries out the reaction S-sulfanyl-L-cysteinyl-[protein] + uridine(34) in tRNA + AH2 + ATP = 2-thiouridine(34) in tRNA + L-cysteinyl-[protein] + A + AMP + diphosphate + H(+). In terms of biological role, catalyzes the 2-thiolation of uridine at the wobble position (U34) of tRNA, leading to the formation of s(2)U34. The polypeptide is tRNA-specific 2-thiouridylase MnmA (Streptococcus thermophilus (strain ATCC BAA-491 / LMD-9)).